Consider the following 154-residue polypeptide: Photosystem II extrinsic protein U, chloroplastic (154 aa).

A chloroplast-targeting transit peptide spans M1–S36. The N-terminal 25 residues, R37 to A61, are a transit peptide targeting the thylakoid.

The protein belongs to the PsbU family. In terms of assembly, PSII is composed of 1 copy each of membrane proteins PsbA, PsbB, PsbC, PsbD, PsbE, PsbF, PsbH, PsbI, PsbJ, PsbK, PsbL, PsbM, PsbT, PsbY, PsbZ, Psb30/Ycf12, at least 3 peripheral proteins of the oxygen-evolving complex and a large number of cofactors. It forms dimeric complexes. The extrinsic subunits in red algae are PsbO (OEC33), PsbQ', cytochrome c-550 and PsbU. In terms of processing, predicted to be translocated into the thylakoid lumen by the Tat system. The position of the first transit peptide cleavage has not been experimentally proven.

The protein localises to the plastid. The protein resides in the chloroplast thylakoid membrane. Its function is as follows. One of the extrinsic, lumenal subunits of photosystem II (PSII). PSII is a light-driven water plastoquinone oxidoreductase, using light energy to abstract electrons from H(2)O, generating a proton gradient subsequently used for ATP formation. The extrinsic proteins stabilize the structure of photosystem II oxygen-evolving complex (OEC), the ion environment of oxygen evolution and protect the OEC against heat-induced inactivation. The chain is Photosystem II extrinsic protein U, chloroplastic from Cyanidium caldarium (Red alga).